We begin with the raw amino-acid sequence, 247 residues long: 3-deoxy-manno-octulosonate cytidylyltransferase (247 aa).

This sequence belongs to the KdsB family.

The protein resides in the cytoplasm. The enzyme catalyses 3-deoxy-alpha-D-manno-oct-2-ulosonate + CTP = CMP-3-deoxy-beta-D-manno-octulosonate + diphosphate. It participates in nucleotide-sugar biosynthesis; CMP-3-deoxy-D-manno-octulosonate biosynthesis; CMP-3-deoxy-D-manno-octulosonate from 3-deoxy-D-manno-octulosonate and CTP: step 1/1. It functions in the pathway bacterial outer membrane biogenesis; lipopolysaccharide biosynthesis. Its function is as follows. Activates KDO (a required 8-carbon sugar) for incorporation into bacterial lipopolysaccharide in Gram-negative bacteria. The chain is 3-deoxy-manno-octulosonate cytidylyltransferase from Afipia carboxidovorans (strain ATCC 49405 / DSM 1227 / KCTC 32145 / OM5) (Oligotropha carboxidovorans).